The sequence spans 756 residues: Receptor-like protein 3 (756 aa).

A signal peptide spans 1 to 50; that stretch reads MTNEGRFKAKGFVRTSSTTRPIQALSFHMIGILLQCVLFISVLSIAVSEA. Positions 51–88 are N-cap; sequence LCNSQDRESLLWFSGNVSSSVSPLNWNPSIDCCSWEGI. Residues 51–725 lie on the Extracellular side of the membrane; that stretch reads LCNSQDRESL…ADTEDEEELK (675 aa). An N-linked (GlcNAc...) asparagine glycan is attached at Asn-66. LRR repeat units follow at residues 95–119, 120–143, 145–169, 174–199, 201–225, 226–250, 252–274, 275–298, 299–322, 323–346, 348–370, 371–395, 397–419, 420–443, 445–471, 474–498, 499–521, and 522–546; these read DSHI…VLRL, HHLS…FLSA, DQLK…TFRN, CFPI…IFMQ, TFDL…MCKS, SPQL…LGRC, KLSV…IYNL, SELE…ITHL, TKLK…IGQL, SRLQ…LANC, NLVK…DFSR, FQSL…VHSC, SLSA…VLEL, ESLS…GILQ, CRNL…LISS, FPNL…LIKL, KSLA…WLGT, and FPHL…LFQL. Asn-126 and Asn-169 each carry an N-linked (GlcNAc...) asparagine glycan. Asn-208 carries N-linked (GlcNAc...) asparagine glycosylation. Residues Asn-262 and Asn-273 are each glycosylated (N-linked (GlcNAc...) asparagine). N-linked (GlcNAc...) asparagine glycans are attached at residues Asn-334 and Asn-345. Residue Asn-381 is glycosylated (N-linked (GlcNAc...) asparagine). Residues Asn-434, Asn-447, and Asn-459 are each glycosylated (N-linked (GlcNAc...) asparagine). One copy of the LRR 19; degenerate repeat lies at 548-569; it reads ALMSQKAYDATERNYLKLPVFV. 4 LRR repeats span residues 570–593, 608–631, 632–656, and 658–681; these read SPNN…IYIR, LKVL…ELSK, LTSL…LTSL, and YMSY…QFDT. Asn-573 is a glycosylation site (N-linked (GlcNAc...) asparagine). N-linked (GlcNAc...) asparagine glycosylation is present at Asn-666. Residues 699–725 are C-cap/acidic domain; that stretch reads LTSCKASTKLPATTTNKADTEDEEELK. Residues 726–746 form a helical membrane-spanning segment; sequence FIFILGVATGFFVSYCFYWCF. The Cytoplasmic segment spans residues 747-756; that stretch reads FARLDAFISK.

The protein belongs to the RLP family. In terms of tissue distribution, expressed at very low levels in the shoot apex.

It is found in the cell membrane. In terms of biological role, involved in the perception of CLV3 and CLV3-like peptides, that act as extracellular signals regulating meristems maintenance. Contributes, with WAKL22/RFO1, to resistance to F.oxysporum (f.) matthioli in cv. Columbia relative to cv. Ty-0. The polypeptide is Receptor-like protein 3 (Arabidopsis thaliana (Mouse-ear cress)).